Here is a 353-residue protein sequence, read N- to C-terminus: UDP-N-acetylglucosamine--N-acetylmuramyl-(pentapeptide) pyrophosphoryl-undecaprenol N-acetylglucosamine transferase (353 aa).

Residues 10-12, N124, S183, and Q283 each bind UDP-N-acetyl-alpha-D-glucosamine; that span reads TGG.

This sequence belongs to the glycosyltransferase 28 family. MurG subfamily.

Its subcellular location is the cell inner membrane. It catalyses the reaction di-trans,octa-cis-undecaprenyl diphospho-N-acetyl-alpha-D-muramoyl-L-alanyl-D-glutamyl-meso-2,6-diaminopimeloyl-D-alanyl-D-alanine + UDP-N-acetyl-alpha-D-glucosamine = di-trans,octa-cis-undecaprenyl diphospho-[N-acetyl-alpha-D-glucosaminyl-(1-&gt;4)]-N-acetyl-alpha-D-muramoyl-L-alanyl-D-glutamyl-meso-2,6-diaminopimeloyl-D-alanyl-D-alanine + UDP + H(+). The protein operates within cell wall biogenesis; peptidoglycan biosynthesis. Functionally, cell wall formation. Catalyzes the transfer of a GlcNAc subunit on undecaprenyl-pyrophosphoryl-MurNAc-pentapeptide (lipid intermediate I) to form undecaprenyl-pyrophosphoryl-MurNAc-(pentapeptide)GlcNAc (lipid intermediate II). In Helicobacter pylori (strain P12), this protein is UDP-N-acetylglucosamine--N-acetylmuramyl-(pentapeptide) pyrophosphoryl-undecaprenol N-acetylglucosamine transferase.